Consider the following 254-residue polypeptide: MAISGVPVLGFFIIAVLMSAQESWAIKEEHVIIQAEFYLNPDQSGEFMFDFDGDEIFHVDMAKKETVWRLEEFGRFASFEAQGALANIAVDKANLEIMTKRSNYTPITNVPPEVTVLTNSPVELREPNVLICFIDKFTPPVVNVTWLRNGKPVTTGVSETVFLPREDHLFRKFHYLPFLPSTEDVYDCRVEHWGLDEPLLKHWEFDAPSPLPETTENVVCALGLTVGLVGIIIGTIFIIKGLRKSNAAERRGPL.

Residues 1–25 (MAISGVPVLGFFIIAVLMSAQESWA) form the signal peptide. The interval 26-109 (IKEEHVIIQA…KRSNYTPITN (84 aa)) is alpha-1. Topologically, residues 26 to 216 (IKEEHVIIQA…APSPLPETTE (191 aa)) are extracellular. Residues Asn103 and Asn143 are each glycosylated (N-linked (GlcNAc...) asparagine). Residues 110–203 (VPPEVTVLTN…GLDEPLLKHW (94 aa)) form an alpha-2 region. The 93-residue stretch at 112–204 (PEVTVLTNSP…LDEPLLKHWE (93 aa)) folds into the Ig-like C1-type domain. Cys132 and Cys188 are joined by a disulfide. A connecting peptide region spans residues 204–216 (EFDAPSPLPETTE). A helical membrane pass occupies residues 217-239 (NVVCALGLTVGLVGIIIGTIFII). The Cytoplasmic segment spans residues 240-254 (KGLRKSNAAERRGPL). Residue Lys244 forms a Glycyl lysine isopeptide (Lys-Gly) (interchain with G-Cter in ubiquitin) linkage.

This sequence belongs to the MHC class II family. As to quaternary structure, heterotrimer that consists of an alpha chain HLA-DRA, a beta chain HLA-DRB and a peptide (peptide-MHCII). Newly synthesized alpha and beta chains forms a heterodimer (MHCII) that associates with the CD74/invariant chain (Ii) in the endoplasmic reticulum (ER). Ii is a trimer composed of three subunits and each subunit interacts with one MHCII dimer, blocking the peptide-binding cleft. As a result, MHCII molecules cannot bind peptides present in the ER. The complex of MHCII and CD74/Ii is transported in vesicles from ER to Golgi to lysosomes, where it encounters antigenic peptides generated via proteolysis of endocytosed antigens. MHCII dimers are dissociated from CD74/Ii by the combined action of proteolysis and HLA-DM. Lysosomal enzymes such as cathepsin, degrade CD74/Ii leaving a 24 amino acid remnant called class II-associated Ii or CLIP. Interacts (via the peptide binding cleft) with CLIP; this interaction inhibits antigen peptide binding before entry in the endosomal compartment. The displacement of CLIP and replacement by a high affinity peptide in lysosomes is performed by HLA-DM heterodimer. HLA-DM catalyzes CLIP dissociation from MHCII, stabilizes empty MHCII and mediates the selection of high affinity peptides. Interacts with HLA-DM heterodimer; this interaction is direct. Interacts (via alpha-1 domain) with TCR (via CDRs). Interacts (via alpha-2 domain) with CD4 (via Ig-like V-type domain); this interaction increases the affinity of TCR for peptide-MHCII. (Microbial infection) Interacts with Epstein-Barr virus BZLF2/gp42. In terms of assembly, (Microbial infection) Interacts with Staphylococcus aureus enterotoxin A/entA, enterotoxin B/entB, enterotoxin C1/entC1, enterotoxin D/entD, and enterotoxin H/entH. Ubiquitinated by MARCHF1 or MARCHF8 at Lys-244 leading to down-regulation of MHCII. When associated with ubiquitination of the beta chain at 'Lys-254', the down-regulation of MHCII may be highly effective. As to expression, expressed in professional APCs: macrophages, dendritic cells and B cells (at protein level). Expressed in thymic epithelial cells (at protein level).

It localises to the cell membrane. The protein localises to the endoplasmic reticulum membrane. Its subcellular location is the early endosome membrane. The protein resides in the late endosome membrane. It is found in the lysosome membrane. It localises to the autolysosome membrane. An alpha chain of antigen-presenting major histocompatibility complex class II (MHCII) molecule. In complex with the beta chain HLA-DRB, displays antigenic peptides on professional antigen presenting cells (APCs) for recognition by alpha-beta T cell receptor (TCR) on HLA-DR-restricted CD4-positive T cells. This guides antigen-specific T-helper effector functions, both antibody-mediated immune response and macrophage activation, to ultimately eliminate the infectious agents and transformed cells. Typically presents extracellular peptide antigens of 10 to 30 amino acids that arise from proteolysis of endocytosed antigens in lysosomes. In the tumor microenvironment, presents antigenic peptides that are primarily generated in tumor-resident APCs likely via phagocytosis of apoptotic tumor cells or macropinocytosis of secreted tumor proteins. Presents peptides derived from intracellular proteins that are trapped in autolysosomes after macroautophagy, a mechanism especially relevant for T cell selection in the thymus and central immune tolerance. The selection of the immunodominant epitopes follows two processing modes: 'bind first, cut/trim later' for pathogen-derived antigenic peptides and 'cut first, bind later' for autoantigens/self-peptides. The anchor residue at position 1 of the peptide N-terminus, usually a large hydrophobic residue, is essential for high affinity interaction with MHCII molecules. The sequence is that of HLA class II histocompatibility antigen, DR alpha chain (HLA-DRA) from Homo sapiens (Human).